The sequence spans 229 residues: Ribonuclease T (229 aa).

In terms of domain architecture, Exonuclease spans 23 to 197; that stretch reads VIIDVETAGF…YDTERTAKLF (175 aa). 4 residues coordinate Mg(2+): Asp26, Glu28, His184, and Asp189. His184 functions as the Proton donor/acceptor in the catalytic mechanism.

This sequence belongs to the RNase T family. In terms of assembly, homodimer. The cofactor is Mg(2+).

In terms of biological role, trims short 3' overhangs of a variety of RNA species, leaving a one or two nucleotide 3' overhang. Responsible for the end-turnover of tRNA: specifically removes the terminal AMP residue from uncharged tRNA (tRNA-C-C-A). Also appears to be involved in tRNA biosynthesis. The sequence is that of Ribonuclease T from Haemophilus influenzae (strain ATCC 51907 / DSM 11121 / KW20 / Rd).